A 105-amino-acid chain; its full sequence is ATP synthase subunit c (105 aa).

3 helical membrane passes run 3-23, 32-52, and 78-98; these read FLSLFFLALAGVAFAHDGGMG, SILGAMIGLGIAAFGGAIGMG, and VAMAMIEAQVIYTLVFAIIAI.

The protein belongs to the ATPase C chain family. As to quaternary structure, F-type ATPases have 2 components, F(1) - the catalytic core - and F(0) - the membrane proton channel. F(1) has five subunits: alpha(3), beta(3), gamma(1), delta(1), epsilon(1). F(0) has three main subunits: a(1), b(2) and c(10-14). The alpha and beta chains form an alternating ring which encloses part of the gamma chain. F(1) is attached to F(0) by a central stalk formed by the gamma and epsilon chains, while a peripheral stalk is formed by the delta and b chains.

It localises to the cell inner membrane. Functionally, f(1)F(0) ATP synthase produces ATP from ADP in the presence of a proton or sodium gradient. F-type ATPases consist of two structural domains, F(1) containing the extramembraneous catalytic core and F(0) containing the membrane proton channel, linked together by a central stalk and a peripheral stalk. During catalysis, ATP synthesis in the catalytic domain of F(1) is coupled via a rotary mechanism of the central stalk subunits to proton translocation. Key component of the F(0) channel; it plays a direct role in translocation across the membrane. A homomeric c-ring of between 10-14 subunits forms the central stalk rotor element with the F(1) delta and epsilon subunits. This chain is ATP synthase subunit c, found in Helicobacter pylori (strain Shi470).